The sequence spans 169 residues: Disulfide bond formation protein B (169 aa).

At 1–14 (MSNDTFYLKREKRF) the chain is on the cytoplasmic side. A helical transmembrane segment spans residues 15–31 (LVLLGIICLSLIGGALY). At 32-49 (MQIALGEAPCPLCILQRY) the chain is on the periplasmic side. A disulfide bond links Cys41 and Cys44. The helical transmembrane segment at 50–64 (ALLFIAIFAFIGAAM) threads the bilayer. Topologically, residues 65-71 (NGRRGVT) are cytoplasmic. Residues 72–89 (VFEALVTLSALCGIAAAG) traverse the membrane as a helical segment. The Periplasmic segment spans residues 90–144 (RHAWILAHPSDSCGIDILQPIVDGLPLATLFPTGFQVSGFCTTPYPPVLGLSLAQ). Cys102 and Cys130 are joined by a disulfide. A helical membrane pass occupies residues 145–163 (WALTAFVLTAILVPACIIR). The Cytoplasmic portion of the chain corresponds to 164-169 (NRRKPY).

It belongs to the DsbB family.

It localises to the cell inner membrane. In terms of biological role, required for disulfide bond formation in some periplasmic proteins. Acts by oxidizing the DsbA protein. This Pseudomonas syringae pv. tomato (strain ATCC BAA-871 / DC3000) protein is Disulfide bond formation protein B.